Consider the following 233-residue polypeptide: Uridylate kinase (233 aa).

9 to 10 (GS) provides a ligand contact to ATP. Gly43 provides a ligand contact to UMP. Positions 44 and 48 each coordinate ATP. Residues Asp65 and 113–119 (VTPGQTT) each bind UMP. The ATP site is built by Thr139, Tyr145, and Asp148.

It belongs to the UMP kinase family. Homohexamer.

The protein localises to the cytoplasm. It carries out the reaction UMP + ATP = UDP + ADP. Its pathway is pyrimidine metabolism; CTP biosynthesis via de novo pathway; UDP from UMP (UMPK route): step 1/1. Inhibited by UTP. In terms of biological role, catalyzes the reversible phosphorylation of UMP to UDP. This is Uridylate kinase from Methanosarcina acetivorans (strain ATCC 35395 / DSM 2834 / JCM 12185 / C2A).